Reading from the N-terminus, the 364-residue chain is Dual-specificity RNA methyltransferase RlmN (364 aa).

The active-site Proton acceptor is the glutamate 91. The region spanning 97-333 (ESDRGTLCIS…VTVRKTRGDD (237 aa)) is the Radical SAM core domain. Cysteines 104 and 338 form a disulfide. 3 residues coordinate [4Fe-4S] cluster: cysteine 111, cysteine 115, and cysteine 118. S-adenosyl-L-methionine-binding positions include 164 to 165 (GE), serine 196, 218 to 220 (SLH), and asparagine 295. Cysteine 338 (S-methylcysteine intermediate) is an active-site residue.

It belongs to the radical SAM superfamily. RlmN family. [4Fe-4S] cluster is required as a cofactor.

It localises to the cytoplasm. The enzyme catalyses adenosine(2503) in 23S rRNA + 2 reduced [2Fe-2S]-[ferredoxin] + 2 S-adenosyl-L-methionine = 2-methyladenosine(2503) in 23S rRNA + 5'-deoxyadenosine + L-methionine + 2 oxidized [2Fe-2S]-[ferredoxin] + S-adenosyl-L-homocysteine. It carries out the reaction adenosine(37) in tRNA + 2 reduced [2Fe-2S]-[ferredoxin] + 2 S-adenosyl-L-methionine = 2-methyladenosine(37) in tRNA + 5'-deoxyadenosine + L-methionine + 2 oxidized [2Fe-2S]-[ferredoxin] + S-adenosyl-L-homocysteine. Its function is as follows. Specifically methylates position 2 of adenine 2503 in 23S rRNA and position 2 of adenine 37 in tRNAs. m2A2503 modification seems to play a crucial role in the proofreading step occurring at the peptidyl transferase center and thus would serve to optimize ribosomal fidelity. The protein is Dual-specificity RNA methyltransferase RlmN of Neisseria meningitidis serogroup C (strain 053442).